The following is a 31-amino-acid chain: Photosystem II reaction center protein T (31 aa).

A helical membrane pass occupies residues 3–23 (ALVYTFLLVGTLGIIFFAIFF).

This sequence belongs to the PsbT family. In terms of assembly, PSII is composed of 1 copy each of membrane proteins PsbA, PsbB, PsbC, PsbD, PsbE, PsbF, PsbH, PsbI, PsbJ, PsbK, PsbL, PsbM, PsbT, PsbY, PsbZ, Psb30/Ycf12, at least 3 peripheral proteins of the oxygen-evolving complex and a large number of cofactors. It forms dimeric complexes.

It localises to the plastid. Its subcellular location is the chloroplast thylakoid membrane. Its function is as follows. Found at the monomer-monomer interface of the photosystem II (PS II) dimer, plays a role in assembly and dimerization of PSII. PSII is a light-driven water plastoquinone oxidoreductase, using light energy to abstract electrons from H(2)O, generating a proton gradient subsequently used for ATP formation. The protein is Photosystem II reaction center protein T of Chlorella vulgaris (Green alga).